We begin with the raw amino-acid sequence, 447 residues long: MTSSSPRNEALFDRARQLMPGGVNSPVRAFGSVGGTPRFMVSAKGAYLTDADGAEYVDLVCSWGPALLGHAHPAVLEAVHAAVDRGLSFGASTPDEANLAAIVKERVPAAERVRMVSTGTEATMTAIRLARGFTGRDLVIKFAGCYHGHLDGLLAAAGSGVATLALPGSAGVTAATAAETLVLPYNDLAAVEAAFAAHGSNIAAVITEAAPANMGVVTPGEGFNAGLSRITREHGALLIVDEVLTGFRTGYSGYWGLTGGAADAAEPWSPDLLTFGKVIGGGMPTAALGGRADIMDYLAPLGPVYQAGTLSGNPVAMAAGVATLAHATPEVYSFIDARSLELSAALSSALDAAGVDHSIQRAGNLFSVAFGTSARGVHNYDDAQGQEVFRYAPFFHSMLDSGVYLPPSVFEAWFLSAAHDDAAMNRIFDALPAAARAAASAAVPAGL.

Lys-277 carries the N6-(pyridoxal phosphate)lysine modification.

It belongs to the class-III pyridoxal-phosphate-dependent aminotransferase family. HemL subfamily. Homodimer. It depends on pyridoxal 5'-phosphate as a cofactor.

It is found in the cytoplasm. It catalyses the reaction (S)-4-amino-5-oxopentanoate = 5-aminolevulinate. It participates in porphyrin-containing compound metabolism; protoporphyrin-IX biosynthesis; 5-aminolevulinate from L-glutamyl-tRNA(Glu): step 2/2. The sequence is that of Glutamate-1-semialdehyde 2,1-aminomutase from Arthrobacter sp. (strain FB24).